We begin with the raw amino-acid sequence, 203 residues long: Urease accessory protein UreG (203 aa).

14–21 (GPVGSGKT) contributes to the GTP binding site.

This sequence belongs to the SIMIBI class G3E GTPase family. UreG subfamily. As to quaternary structure, homodimer. UreD, UreF and UreG form a complex that acts as a GTP-hydrolysis-dependent molecular chaperone, activating the urease apoprotein by helping to assemble the nickel containing metallocenter of UreC. The UreE protein probably delivers the nickel.

It localises to the cytoplasm. In terms of biological role, facilitates the functional incorporation of the urease nickel metallocenter. This process requires GTP hydrolysis, probably effectuated by UreG. The chain is Urease accessory protein UreG from Rhizobium meliloti (strain 1021) (Ensifer meliloti).